The sequence spans 661 residues: Chermesin D/asnovolin J monooxidase nvfH (661 aa).

Asn12 carries N-linked (GlcNAc...) asparagine glycosylation. Residues 89–111 (VLIIGAGYGGLLFAVRIIQTGAF) form a helical membrane-spanning segment. FAD is bound by residues 128–131 (TWYW), 140–141 (DV), and Tyr146. 138–140 (MCD) lines the NADP(+) pocket. Residues 286-292 (TGATAIQ) and 309-310 (RT) contribute to the NADP(+) site. N-linked (GlcNAc...) asparagine glycans are attached at residues Asn382 and Asn538.

It belongs to the FAD-binding monooxygenase family. It depends on FAD as a cofactor.

It localises to the membrane. It catalyses the reaction chermesin D + AH2 + O2 = asnovolin I + A + H2O. The enzyme catalyses asnovolin J + AH2 + O2 = asnovolin A + A + H2O. It participates in secondary metabolite biosynthesis; terpenoid biosynthesis. Its function is as follows. Chermesin D/asnovolin J monooxidase; part of the gene cluster that mediates the biosynthesis of novofumigatonin, a heavily oxygenated meroterpenoid containing a unique orthoester moiety. The first step of the pathway is the synthesis of 3,5-dimethylorsellinic acid (DMOA) by the polyketide synthase nvfA via condensation of one acetyl-CoA starter unit with 3 malonyl-CoA units and 2 methylations. DMOA is then converted to farnesyl-DMOA by the farnesyltransferase nvfB. Epoxydation by FAD-dependent monooxygenase nvfK, followed by a protonation-initiated cyclization catalyzed by the terpene cyclase nvfL leads to the production of asnavolin H. The short chain dehydrogenase nvfC then as a 3-OH dehydrogenase of asnovolin H to yield chemesin D. There are two branches to synthesize asnovolin A from chemesin D. In one branch, chemesin D undergoes Baeyer-Villiger oxidation by nvfH, methylation by nvfJ, and enoyl reduction by the nvfM D enoylreductase that reduces the double bond between C-5'and C-6', to form respectively asnovolin I, asnovolin K, and asnovolin A. In the other branch, the methylation precedes the Baeyer-Villiger oxidation and the enoyl reduction to yield asnovolin A via the asnovolin J intermediate. Asnovolin A is further converted to fumigatonoid A by the Fe(II)/2-oxoglutarate-dependent dioxygenase nvfI that catalyzes an endoperoxidation reaction. The alpha/beta hydrolase nvfD then acts as an epimerase that converts fumigatonoid A to its C-5' epimer, which then undergoes spontaneous or nvfD-catalyzed lactonization. The following step utilizes the ketoreductase nvfG to produce fumigatonoid B. The dioxygenase nvfE further converts fumigatonoid B into fumigatonoid C. Finally the Fe(II)/2-oxoglutarate-dependent dioxygenase nvfF catalyzes two rounds of oxidation to transform fumigatonoid C into the end product, novofumigatonin A. The protein is Chermesin D/asnovolin J monooxidase nvfH of Aspergillus novofumigatus (strain IBT 16806).